Here is a 331-residue protein sequence, read N- to C-terminus: CRISPR-associated endonuclease Cas1 (331 aa).

Residues E158, H223, and D238 each contribute to the Mn(2+) site.

It belongs to the CRISPR-associated endonuclease Cas1 family. Homodimer, forms a heterotetramer with a Cas2 homodimer. Mg(2+) serves as cofactor. It depends on Mn(2+) as a cofactor.

In terms of biological role, CRISPR (clustered regularly interspaced short palindromic repeat), is an adaptive immune system that provides protection against mobile genetic elements (viruses, transposable elements and conjugative plasmids). CRISPR clusters contain spacers, sequences complementary to antecedent mobile elements, and target invading nucleic acids. CRISPR clusters are transcribed and processed into CRISPR RNA (crRNA). Acts as a dsDNA endonuclease. Involved in the integration of spacer DNA into the CRISPR cassette. Plasmid targeted by CRISPR locus P1 transform wild-type cells very poorly. In Haloferax volcanii (strain ATCC 29605 / DSM 3757 / JCM 8879 / NBRC 14742 / NCIMB 2012 / VKM B-1768 / DS2) (Halobacterium volcanii), this protein is CRISPR-associated endonuclease Cas1.